The sequence spans 562 residues: Potassium-transporting ATPase potassium-binding subunit (562 aa).

12 consecutive transmembrane segments (helical) span residues 6-26, 63-83, 132-152, 175-195, 253-273, 283-303, 327-347, 356-376, 379-399, 416-436, 483-503, and 526-546; these read FLLI…LGSF, ALAI…LLMM, GLTV…FALI, LYVL…QGVL, FVQM…FGQV, LIWA…YAEL, FGIL…CGAV, ALGG…FGGV, GLYG…LMIG, MTAL…ALAL, LLLA…VLAI, and LFIG…FIPA.

The protein belongs to the KdpA family. As to quaternary structure, the system is composed of three essential subunits: KdpA, KdpB and KdpC.

The protein localises to the cell inner membrane. In terms of biological role, part of the high-affinity ATP-driven potassium transport (or Kdp) system, which catalyzes the hydrolysis of ATP coupled with the electrogenic transport of potassium into the cytoplasm. This subunit binds the periplasmic potassium ions and delivers the ions to the membrane domain of KdpB through an intramembrane tunnel. The protein is Potassium-transporting ATPase potassium-binding subunit of Yersinia enterocolitica serotype O:8 / biotype 1B (strain NCTC 13174 / 8081).